Here is a 271-residue protein sequence, read N- to C-terminus: Undecaprenyl-diphosphatase (271 aa).

The next 8 helical transmembrane spans lie at 2 to 22 (LLILKAIILAIVEGLTEFVPV), 42 to 62 (ANLFNVVIQLGAILAVVVVYW), 80 to 100 (LRFWINIVVACIPAVIFGFSL), 108 to 128 (LFNPITVAIGLVIGGILMIIV), 149 to 168 (SIFVGMFQCLALWPGMSRSA), 175 to 195 (WIAGLSPVVAAEFSFFLAIPV), 214 to 234 (IEFIALIVGFVGAFLVSLVVI), and 248 to 268 (IFAIYRIFIGAILLILAIFKI).

It belongs to the UppP family.

It is found in the cell membrane. The catalysed reaction is di-trans,octa-cis-undecaprenyl diphosphate + H2O = di-trans,octa-cis-undecaprenyl phosphate + phosphate + H(+). Its function is as follows. Catalyzes the dephosphorylation of undecaprenyl diphosphate (UPP). Confers resistance to bacitracin. The sequence is that of Undecaprenyl-diphosphatase from Clostridium tetani (strain Massachusetts / E88).